Here is a 1344-residue protein sequence, read N- to C-terminus: Regulatory-associated protein of TOR 1 (1344 aa).

The segment covering 28-44 (CVSSHDDGDSRRKDSEA) has biased composition (basic and acidic residues). Disordered regions lie at residues 28–56 (CVSS…GTTE) and 771–818 (ASTD…DSVS). Positions 785 to 816 (SSSPLGSSGLMQGSPLSDDSSLHSDSGMMHDS) are enriched in low complexity. WD repeat units lie at residues 1025 to 1064 (RFET…LLNG), 1070 to 1111 (FPDK…GKQK), 1125 to 1164 (GARD…LVRS), 1168 to 1208 (ESEC…PLVC), 1214 to 1255 (QKVE…DTYL), 1259 to 1298 (AHRG…LGII), and 1307 to 1344 (QKIG…SQAR).

The protein belongs to the WD repeat RAPTOR family. In terms of assembly, interacts with TOR, ATPK1 and ML1. Interacts with KIN10. In terms of processing, phosphorylated by KIN10. As to expression, expressed in roots, leaves, flowers and seeds.

The protein localises to the cytoplasm. Its function is as follows. Probable component of the plant TOR kinase pathway that recruits substrates for TOR. Modulates plant cell growth and regulates the activity of ATPK1 kinase in response to osmotic stress. This chain is Regulatory-associated protein of TOR 1 (RAPTOR1), found in Arabidopsis thaliana (Mouse-ear cress).